The primary structure comprises 595 residues: Arginine--tRNA ligase (595 aa).

A 'HIGH' region motif is present at residues 132 to 142 (ANPTGPLHVGH).

The protein belongs to the class-I aminoacyl-tRNA synthetase family. In terms of assembly, monomer.

Its subcellular location is the cytoplasm. The enzyme catalyses tRNA(Arg) + L-arginine + ATP = L-arginyl-tRNA(Arg) + AMP + diphosphate. The sequence is that of Arginine--tRNA ligase from Cupriavidus necator (strain ATCC 17699 / DSM 428 / KCTC 22496 / NCIMB 10442 / H16 / Stanier 337) (Ralstonia eutropha).